A 366-amino-acid polypeptide reads, in one-letter code: L-tyrosine C(3)-methyltransferase (366 aa).

The segment covering 1–12 (MTISLENTTVGQ) has biased composition (polar residues). A disordered region spans residues 1–22 (MTISLENTTVGQNPAGGPPTGK). E223 contributes to the S-adenosyl-L-methionine binding site.

It belongs to the class I-like SAM-binding methyltransferase superfamily. Cation-independent O-methyltransferase family.

It carries out the reaction L-tyrosine + S-adenosyl-L-methionine = 3-methyl-L-tyrosine + S-adenosyl-L-homocysteine + H(+). Its pathway is antibiotic biosynthesis. In terms of biological role, C-methyltransferase that mediates the methylation of tyrosine into 3-methyl-L-tyrosine (3-Me-Tyr) in biosynthesis of saframycin A, a potent antitumor antibiotic that belongs to the tetrahydroisoquinoline family. Involved in biosynthesis of 3-hydroxy-5-methyl-O-methyltyrosine (3-OH-5-Me-OMe-Tyr), a core structure of saframycin A. The sequence is that of L-tyrosine C(3)-methyltransferase from Streptomyces lavendulae.